Reading from the N-terminus, the 167-residue chain is Osteocalcin 2a (167 aa).

The N-terminal stretch at 1 to 18 (MKSLTLLTICAVLSVSLS) is a signal peptide. Residues 19–118 (MNDLALDVVL…LASVLLRRKR (100 aa)) constitute a propeptide that is removed on maturation. The tract at residues 28–99 (LDPAPDPATE…TTEDPAAATE (72 aa)) is disordered. A compositionally biased stretch (low complexity) spans 38 to 87 (PAPAADSSASSSASSSSSSASDSSASASDSSDSDSSSASSSSSSSESASA). A Gla domain is found at 131 to 163 (QVESLSEVCELNLACEHMAETAGIVAAYTAYYG). Ca(2+) contacts are provided by Glu133, Glu137, and Glu140. A 4-carboxyglutamate mark is found at Glu133, Glu137, and Glu140. Cys139 and Cys145 are oxidised to a cystine.

It belongs to the osteocalcin/matrix Gla protein family. Gamma-carboxyglutamate residues are formed by vitamin K dependent carboxylation. These residues are essential for the binding of calcium.

It localises to the secreted. Binds strongly to apatite and calcium. The sequence is that of Osteocalcin 2a from Oncorhynchus mykiss (Rainbow trout).